A 355-amino-acid polypeptide reads, in one-letter code: Aurora kinase (355 aa).

A Protein kinase domain is found at 89–340 (FEIGKPLGKG…LEQVMRHPWI (252 aa)). ATP is bound by residues 95–103 (LGKGKFGRV) and K118. D212 (proton acceptor) is an active-site residue.

The protein belongs to the protein kinase superfamily. Ser/Thr protein kinase family. Aurora subfamily. As to quaternary structure, component of the CPC complex at least composed of ark1, bir1 and pic1. Interacts with the mitotic checkpoint complex (MCC) subunit mad3.

Its subcellular location is the nucleus. It localises to the cytoplasm. The protein resides in the cytoskeleton. The protein localises to the spindle. It carries out the reaction L-seryl-[protein] + ATP = O-phospho-L-seryl-[protein] + ADP + H(+). The enzyme catalyses L-threonyl-[protein] + ATP = O-phospho-L-threonyl-[protein] + ADP + H(+). In terms of biological role, component of the chromosomal passenger complex (CPC), a complex that acts as a key regulator of chromosome segregation and cytokinesis. Has a role in error-correction of aberrent kinetochore-microtubule attachments to ensure that sister kinetochores become bioriented and connect to opposite poles by promoting spindle assembly checkpoint signaling. Ark1 is also required for phosphorylation of histone H3 that accompanies chromosome condensation and condensin recruitment to mitotic chromatin. This is Aurora kinase (ark1) from Schizosaccharomyces pombe (strain 972 / ATCC 24843) (Fission yeast).